The chain runs to 177 residues: dCTP deaminase, dUMP-forming (177 aa).

DCTP contacts are provided by residues 95-100, Asp112, 120-122, Gln141, Tyr155, and Gln162; these read RSSLGR and TLE. Glu122 functions as the Proton donor/acceptor in the catalytic mechanism.

The protein belongs to the dCTP deaminase family. As to quaternary structure, homotrimer.

It carries out the reaction dCTP + 2 H2O = dUMP + NH4(+) + diphosphate. It participates in pyrimidine metabolism; dUMP biosynthesis; dUMP from dCTP: step 1/1. Bifunctional enzyme that catalyzes both the deamination of dCTP to dUTP and the hydrolysis of dUTP to dUMP without releasing the toxic dUTP intermediate. This chain is dCTP deaminase, dUMP-forming, found in Hydrogenobaculum sp. (strain Y04AAS1).